Consider the following 634-residue polypeptide: Chaperone protein HtpG (634 aa).

An a; substrate-binding region spans residues 1-342 (MTVASHKETL…SNDLPLNISR (342 aa)). Positions 343 to 559 (EILQNNRVID…QHDMSGYLER (217 aa)) are b. The segment at 560 to 634 (LLKEAGQQAP…LNSLLLAMAD (75 aa)) is c.

This sequence belongs to the heat shock protein 90 family. As to quaternary structure, homodimer.

It localises to the cytoplasm. Molecular chaperone. Has ATPase activity. The polypeptide is Chaperone protein HtpG (Nitrosococcus oceani (strain ATCC 19707 / BCRC 17464 / JCM 30415 / NCIMB 11848 / C-107)).